The sequence spans 488 residues: uncharacterized protein (488 aa).

This sequence belongs to the IIV-6 467R family.

This is an uncharacterized protein from Invertebrate iridescent virus 3 (IIV-3).